The primary structure comprises 358 residues: Fructose-bisphosphate aldolase (358 aa).

Residue serine 62 coordinates D-glyceraldehyde 3-phosphate. Aspartate 109 (proton donor) is an active-site residue. Zn(2+) contacts are provided by histidine 110, aspartate 144, glutamate 174, and histidine 226. Glycine 227 provides a ligand contact to dihydroxyacetone phosphate. Histidine 264 serves as a coordination point for Zn(2+). Residues 265–267 (GGS) and 286–289 (NIDT) each bind dihydroxyacetone phosphate.

This sequence belongs to the class II fructose-bisphosphate aldolase family. Zn(2+) is required as a cofactor.

It carries out the reaction beta-D-fructose 1,6-bisphosphate = D-glyceraldehyde 3-phosphate + dihydroxyacetone phosphate. It participates in carbohydrate degradation; glycolysis; D-glyceraldehyde 3-phosphate and glycerone phosphate from D-glucose: step 4/4. In terms of biological role, catalyzes the aldol condensation of dihydroxyacetone phosphate (DHAP or glycerone-phosphate) with glyceraldehyde 3-phosphate (G3P) to form fructose 1,6-bisphosphate (FBP) in gluconeogenesis and the reverse reaction in glycolysis. The chain is Fructose-bisphosphate aldolase (fba) from Edwardsiella ictaluri (strain 93-146).